Here is a 192-residue protein sequence, read N- to C-terminus: MVAKQESVVAPQVDVSKWSGKELELGKKVNEYAKSLATFKYPFFIPPPYPPAKPNMALSTQVNKMKQTANEAFKRKKYEEAKKLYGLALQLALNRCTWEPSILTREEASVMLCNRAAAEIALSQFPEALADANAALKIRNNYGKCYYRKAKALEAMHRIEEAKQVVRDGLILAEPVTRNELVALWASYTEKD.

As to quaternary structure, component of the heterotetrameric Sec62/63complex composed of sec62, sec63, sec66 and sec72. The Sec62/63 complex associates with the Sec61 complex to form the Sec complex.

It localises to the cytoplasm. The protein localises to the nucleus. Acts as a non-essential component of the Sec62/63 complex which is involved in SRP-independent post-translational translocation across the endoplasmic reticulum (ER) and functions together with the Sec61 complex and bip1 in a channel-forming translocon complex. A cycle of assembly and disassembly of Sec62/63 complex from sec61 may govern the activity of the translocon. sec72 may be involved in signal peptide recognition for a defined subset of leader peptides, or may increase the efficiency of unusual or 'difficult' secretory precursors to the translocation pore, it may be that this protein binds charged leader peptides to the membrane until they engage the translocation apparatus. The chain is ER protein translocation subcomplex subunit sec67 (sec67) from Schizosaccharomyces pombe (strain 972 / ATCC 24843) (Fission yeast).